The following is a 248-amino-acid chain: tRNA N(3)-methylcytidine methyltransferase trm141 (248 aa).

S-adenosyl-L-methionine contacts are provided by Trp23, Tyr27, Gly63, Asp86, Asp112, and Ile133.

This sequence belongs to the methyltransferase superfamily. METL family.

It is found in the cytoplasm. It localises to the nucleus. The enzyme catalyses cytidine(32) in tRNA(Ser) + S-adenosyl-L-methionine = N(3)-methylcytidine(32) in tRNA(Ser) + S-adenosyl-L-homocysteine + H(+). S-adenosyl-L-methionine-dependent methyltransferase that mediates N(3)-methylcytidine modification of residue 32 of the tRNA anticodon loop of tRNA(Ser). N(3)-methylcytidine methylation by trm141 requires the formation of N(6)-dimethylallyladenosine(37) (i6A37) by tit1 as prerequisite. Does not catalyze N(3)-methylcytidine modification of tRNA(Thr). This Schizosaccharomyces pombe (strain 972 / ATCC 24843) (Fission yeast) protein is tRNA N(3)-methylcytidine methyltransferase trm141.